Reading from the N-terminus, the 283-residue chain is Phosphate import ATP-binding protein PstB 2 (283 aa).

In terms of domain architecture, ABC transporter spans 36-278; it reads LQVKQFNFYY…PKKKQTEDYI (243 aa). 69 to 76 contributes to the ATP binding site; sequence GPSGCGKS.

The protein belongs to the ABC transporter superfamily. Phosphate importer (TC 3.A.1.7) family. In terms of assembly, the complex is composed of two ATP-binding proteins (PstB), two transmembrane proteins (PstC and PstA) and a solute-binding protein (PstS).

It is found in the cell inner membrane. It catalyses the reaction phosphate(out) + ATP + H2O = ADP + 2 phosphate(in) + H(+). Part of the ABC transporter complex PstSACB involved in phosphate import. Responsible for energy coupling to the transport system. The polypeptide is Phosphate import ATP-binding protein PstB 2 (Nitrosococcus oceani (strain ATCC 19707 / BCRC 17464 / JCM 30415 / NCIMB 11848 / C-107)).